We begin with the raw amino-acid sequence, 462 residues long: MQLQGKDKKVHFIGIGGAGMSGIATVMLEMGGYQVSGSDIKRSAVIDRLENLGAKCNIGHKTSNINNEIDAVVYSTAISPENPEILETQRLGIPLIRRGQMLARLMKEKKGIAVAGAHGKTTTTSMTALILEENSFDPTIIIGGDLSNIGGNAKLGQGEYMVAEADESDGSFLLLDPNIAVVTNIEDDHLDYYGTRENIAKAFRQFLAKLSAEGLAVICLDDPVLKEITTGLTCQVVTYGSLGSGADYQIKVLETRNGVNQGEVYFQEERLGMLELHVPGYHNLLNAMAAVAIGRHLNLDFEKIARALRKFTGAKRRFQVIGKVNGITVVDDYAHHPTEVKATLQAARTSHPGRIVTIFQPHRYSRTKQLFKEFGQSFTNGDLIILTDIYAASELPLEGVHTKLILDAIPLQEGQQVLYLPTLKDAADYLADYANPGDLVLTMGAGDVWTLGRELIKRLEEK.

116-122 is an ATP binding site; sequence GAHGKTT.

It belongs to the MurCDEF family.

The protein resides in the cytoplasm. The catalysed reaction is UDP-N-acetyl-alpha-D-muramate + L-alanine + ATP = UDP-N-acetyl-alpha-D-muramoyl-L-alanine + ADP + phosphate + H(+). The protein operates within cell wall biogenesis; peptidoglycan biosynthesis. Its function is as follows. Cell wall formation. This Desulforamulus reducens (strain ATCC BAA-1160 / DSM 100696 / MI-1) (Desulfotomaculum reducens) protein is UDP-N-acetylmuramate--L-alanine ligase.